We begin with the raw amino-acid sequence, 340 residues long: Phosphoribosylformylglycinamidine cyclo-ligase (340 aa).

It belongs to the AIR synthase family.

Its subcellular location is the cytoplasm. It carries out the reaction 2-formamido-N(1)-(5-O-phospho-beta-D-ribosyl)acetamidine + ATP = 5-amino-1-(5-phospho-beta-D-ribosyl)imidazole + ADP + phosphate + H(+). The protein operates within purine metabolism; IMP biosynthesis via de novo pathway; 5-amino-1-(5-phospho-D-ribosyl)imidazole from N(2)-formyl-N(1)-(5-phospho-D-ribosyl)glycinamide: step 2/2. This is Phosphoribosylformylglycinamidine cyclo-ligase from Streptococcus uberis (strain ATCC BAA-854 / 0140J).